The primary structure comprises 273 residues: MSQGYLEFPNIDPVLVSIGPVSVRWYGLMYLVGFMFALWLANRRADKPGSGWTREQVSDLLFAGFLGVVIGGRVGYVIFYNFDLFLADPLYLFKVWTGGMSFHGGLLGVITAMFWYAHKNGRTFFGVADFVAPLVPFGLGMGRMGNFMNSELWGRVTDVPWAIIFPNGGPLPRHPSQLYEMFLEGIVLFFILNWFIKKPRPLGAVSGLFLAGYGTFRFLVEFVREPDAQLGLFGGYISMGQILSSPMIILGILMMVWAYKRGLYQDKVQAETK.

The next 7 helical transmembrane spans lie at 21–41 (VSVR…LWLA), 60–80 (LLFA…VIFY), 95–115 (VWTG…AMFW), 124–144 (FFGV…MGRM), 176–196 (SQLY…NWFI), 203–223 (GAVS…VEFV), and 237–257 (ISMG…MMVW). Arginine 143 is a binding site for a 1,2-diacyl-sn-glycero-3-phospho-(1'-sn-glycerol).

It belongs to the Lgt family.

It localises to the cell inner membrane. The enzyme catalyses L-cysteinyl-[prolipoprotein] + a 1,2-diacyl-sn-glycero-3-phospho-(1'-sn-glycerol) = an S-1,2-diacyl-sn-glyceryl-L-cysteinyl-[prolipoprotein] + sn-glycerol 1-phosphate + H(+). Its pathway is protein modification; lipoprotein biosynthesis (diacylglyceryl transfer). Catalyzes the transfer of the diacylglyceryl group from phosphatidylglycerol to the sulfhydryl group of the N-terminal cysteine of a prolipoprotein, the first step in the formation of mature lipoproteins. The chain is Phosphatidylglycerol--prolipoprotein diacylglyceryl transferase from Vibrio campbellii (strain ATCC BAA-1116).